The chain runs to 465 residues: Putrescine aminotransferase (465 aa).

Residues 150 to 151 (GT) and Gln274 contribute to the pyridoxal 5'-phosphate site. The residue at position 300 (Lys300) is an N6-(pyridoxal phosphate)lysine. Residue Thr332 coordinates pyridoxal 5'-phosphate.

The protein belongs to the class-III pyridoxal-phosphate-dependent aminotransferase family. Putrescine aminotransferase subfamily. Requires pyridoxal 5'-phosphate as cofactor.

The enzyme catalyses an alkane-alpha,omega-diamine + 2-oxoglutarate = an omega-aminoaldehyde + L-glutamate. The catalysed reaction is putrescine + 2-oxoglutarate = 1-pyrroline + L-glutamate + H2O. It catalyses the reaction cadaverine + 2-oxoglutarate = 5-aminopentanal + L-glutamate. It functions in the pathway amine and polyamine degradation; putrescine degradation; 4-aminobutanal from putrescine (transaminase route): step 1/1. In terms of biological role, catalyzes the aminotransferase reaction from putrescine to 2-oxoglutarate, leading to glutamate and 4-aminobutanal, which spontaneously cyclizes to form 1-pyrroline. This is the first step in one of two pathways for putrescine degradation, where putrescine is converted into 4-aminobutanoate (gamma-aminobutyrate or GABA) via 4-aminobutanal. Also functions as a cadaverine transaminase in a a L-lysine degradation pathway to succinate that proceeds via cadaverine, glutarate and L-2-hydroxyglutarate. This Cronobacter sakazakii (strain ATCC BAA-894) (Enterobacter sakazakii) protein is Putrescine aminotransferase.